Consider the following 393-residue polypeptide: Mitogen-activated protein kinase homolog NTF4 (393 aa).

Residues M1–N32 are disordered. Positions K60–L345 constitute a Protein kinase domain. ATP is bound by residues I66–V74 and K89. Residue D186 is the Proton acceptor of the active site. T218 is modified (phosphothreonine). The TXY motif lies at T218–Y220. Phosphotyrosine is present on Y220.

The protein belongs to the protein kinase superfamily. CMGC Ser/Thr protein kinase family. MAP kinase subfamily. Mg(2+) serves as cofactor. Post-translationally, dually phosphorylated on Thr-218 and Tyr-220, which activates the enzyme. Very low autophosphorylation, although dramatically increased when Mn(2+) is added to the reaction instead of Mg(2+).

It catalyses the reaction L-seryl-[protein] + ATP = O-phospho-L-seryl-[protein] + ADP + H(+). It carries out the reaction L-threonyl-[protein] + ATP = O-phospho-L-threonyl-[protein] + ADP + H(+). With respect to regulation, activated by tyrosine and threonine phosphorylation. This chain is Mitogen-activated protein kinase homolog NTF4 (NTF4), found in Nicotiana tabacum (Common tobacco).